A 215-amino-acid chain; its full sequence is Histidine biosynthesis bifunctional protein HisIE (215 aa).

The interval 1-126 (MSHSDLPLAN…GHKSPPPADM (126 aa)) is phosphoribosyl-AMP cyclohydrolase. Residues 127–215 (LTELARVIGD…VYRKLGDRRR (89 aa)) form a phosphoribosyl-ATP pyrophosphohydrolase region.

The protein in the N-terminal section; belongs to the PRA-CH family. It in the C-terminal section; belongs to the PRA-PH family.

Its subcellular location is the cytoplasm. It catalyses the reaction 1-(5-phospho-beta-D-ribosyl)-ATP + H2O = 1-(5-phospho-beta-D-ribosyl)-5'-AMP + diphosphate + H(+). The enzyme catalyses 1-(5-phospho-beta-D-ribosyl)-5'-AMP + H2O = 1-(5-phospho-beta-D-ribosyl)-5-[(5-phospho-beta-D-ribosylamino)methylideneamino]imidazole-4-carboxamide. Its pathway is amino-acid biosynthesis; L-histidine biosynthesis; L-histidine from 5-phospho-alpha-D-ribose 1-diphosphate: step 2/9. It functions in the pathway amino-acid biosynthesis; L-histidine biosynthesis; L-histidine from 5-phospho-alpha-D-ribose 1-diphosphate: step 3/9. The sequence is that of Histidine biosynthesis bifunctional protein HisIE (hisI) from Synechocystis sp. (strain ATCC 27184 / PCC 6803 / Kazusa).